Consider the following 659-residue polypeptide: Exoribonuclease 2 (659 aa).

Residues 189–531 (RENLTALHFV…NHRLIKAVLA (343 aa)) enclose the RNB domain. One can recognise an S1 motif domain in the interval 576–658 (NVEFNAEVQD…ATRSIVGEIL (83 aa)).

It belongs to the RNR ribonuclease family. RNase II subfamily.

The protein localises to the cytoplasm. It carries out the reaction Exonucleolytic cleavage in the 3'- to 5'-direction to yield nucleoside 5'-phosphates.. Its function is as follows. Involved in mRNA degradation. Hydrolyzes single-stranded polyribonucleotides processively in the 3' to 5' direction. This Haemophilus influenzae (strain 86-028NP) protein is Exoribonuclease 2.